The sequence spans 331 residues: Ketol-acid reductoisomerase (NADP(+)) (331 aa).

In terms of domain architecture, KARI N-terminal Rossmann spans 2-182; it reads ARLYYDADAN…GGTRAGILET (181 aa). NADP(+) contacts are provided by residues 25 to 28, Ser51, Ser53, and 83 to 86; these read YGSQ and DEVQ. Residue His108 is part of the active site. Gly134 provides a ligand contact to NADP(+). The KARI C-terminal knotted domain maps to 183–328; the sequence is TFREETETDL…KDLRAMFSWT (146 aa). Mg(2+) contacts are provided by Asp191, Glu195, Glu227, and Glu231. Ser252 provides a ligand contact to substrate.

This sequence belongs to the ketol-acid reductoisomerase family. It depends on Mg(2+) as a cofactor.

It carries out the reaction (2R)-2,3-dihydroxy-3-methylbutanoate + NADP(+) = (2S)-2-acetolactate + NADPH + H(+). It catalyses the reaction (2R,3R)-2,3-dihydroxy-3-methylpentanoate + NADP(+) = (S)-2-ethyl-2-hydroxy-3-oxobutanoate + NADPH + H(+). It participates in amino-acid biosynthesis; L-isoleucine biosynthesis; L-isoleucine from 2-oxobutanoate: step 2/4. Its pathway is amino-acid biosynthesis; L-valine biosynthesis; L-valine from pyruvate: step 2/4. Functionally, involved in the biosynthesis of branched-chain amino acids (BCAA). Catalyzes an alkyl-migration followed by a ketol-acid reduction of (S)-2-acetolactate (S2AL) to yield (R)-2,3-dihydroxy-isovalerate. In the isomerase reaction, S2AL is rearranged via a Mg-dependent methyl migration to produce 3-hydroxy-3-methyl-2-ketobutyrate (HMKB). In the reductase reaction, this 2-ketoacid undergoes a metal-dependent reduction by NADPH to yield (R)-2,3-dihydroxy-isovalerate. The sequence is that of Ketol-acid reductoisomerase (NADP(+)) from Acaryochloris marina (strain MBIC 11017).